The following is a 281-amino-acid chain: Probable endonuclease 4 (281 aa).

Residues H69, H109, E145, D179, H182, H216, D229, H231, and E261 each contribute to the Zn(2+) site.

It belongs to the AP endonuclease 2 family. It depends on Zn(2+) as a cofactor.

It catalyses the reaction Endonucleolytic cleavage to 5'-phosphooligonucleotide end-products.. In terms of biological role, endonuclease IV plays a role in DNA repair. It cleaves phosphodiester bonds at apurinic or apyrimidinic (AP) sites, generating a 3'-hydroxyl group and a 5'-terminal sugar phosphate. This Pectobacterium atrosepticum (strain SCRI 1043 / ATCC BAA-672) (Erwinia carotovora subsp. atroseptica) protein is Probable endonuclease 4.